A 205-amino-acid polypeptide reads, in one-letter code: MSKRHSAKYKLDRRMGENIWGRPKSPVNSRAYGPGQHGQRRKSKVSDFGLQLRAKQKLKGYYGNITEKQFVRIYTEAARRKGNTSENLIALLESRLDAVVYRAKFVPTPFAARQFVNHGHVLVNGKRVNIPSYRVKPGDVVSVRERSRNMALVLEALQSSERDTPDYITLDAKGMSATFVRAPELAEVPYPVKMEPNLVVEFYAS.

A disordered region spans residues 18–46; sequence NIWGRPKSPVNSRAYGPGQHGQRRKSKVS. Residues 94–155 enclose the S4 RNA-binding domain; it reads SRLDAVVYRA…RSRNMALVLE (62 aa).

The protein belongs to the universal ribosomal protein uS4 family. As to quaternary structure, part of the 30S ribosomal subunit. Contacts protein S5. The interaction surface between S4 and S5 is involved in control of translational fidelity.

Its function is as follows. One of the primary rRNA binding proteins, it binds directly to 16S rRNA where it nucleates assembly of the body of the 30S subunit. Functionally, with S5 and S12 plays an important role in translational accuracy. This chain is Small ribosomal subunit protein uS4, found in Phenylobacterium zucineum (strain HLK1).